Consider the following 524-residue polypeptide: Metal transporter Nramp2 (524 aa).

The tract at residues 34 to 58 is disordered; sequence AYDSDDKVSIAVSDSDSEDGGGGGG. 12 helical membrane passes run 70–90, 98–118, 155–175, 179–199, 207–227, 253–273, 295–315, 341–361, 389–409, 420–440, 457–477, and 486–506; these read LWRFTGPGFLMCIAFLDPGNL, AAAGYQLLWLLLWATVMGALV, LALVGADIQEVIGSAIAIKIL, TVPLWGGVVITAFDCFIFLFL, LEAFFGVLIAVMAVSFAIMFG, AVGIVGCIIMPHNVFLHSALV, IESILALIVSFFINICVTTVF, YGTAFFPILYIWAIGLLASGQ, AMITRSFAIIPTMIVALFFDT, ALNVLQSIQIPFALIPLITLV, VISWIVTVFLMLINGYLILSF, and LVRSSLCVVLAVYLAFIVYLI.

It belongs to the NRAMP (TC 2.A.55) family.

It is found in the membrane. Probable metal transporter. The polypeptide is Metal transporter Nramp2 (NRAMP2) (Oryza sativa subsp. japonica (Rice)).